A 222-amino-acid chain; its full sequence is GTP cyclohydrolase 1 (222 aa).

Zn(2+)-binding residues include cysteine 111, histidine 114, and cysteine 182.

Belongs to the GTP cyclohydrolase I family. In terms of assembly, homomer.

The enzyme catalyses GTP + H2O = 7,8-dihydroneopterin 3'-triphosphate + formate + H(+). It functions in the pathway cofactor biosynthesis; 7,8-dihydroneopterin triphosphate biosynthesis; 7,8-dihydroneopterin triphosphate from GTP: step 1/1. This Salmonella gallinarum (strain 287/91 / NCTC 13346) protein is GTP cyclohydrolase 1.